The chain runs to 622 residues: MLEQINSPYDLKKLDIKDLPRLSEEIRQFIVEKVSKTGGHLASNLGIVELTLALHYVFNSPVDKIIWDVGHQCYVHKMITGRRDKFDTLRQFNGLSGYTKRTESIHDIFGAGHSSTSLSAALGIATARDLKGEKYHVIAVIGDGALTGGMALEALNNIGRSRKDVIVILNHNEMSISENVGSLSLYLSKLRTDPTYNKVKQEIDNLLNIIPPIGKSLHKYIEKIKDSIKQLVVPGMFFEELGFTYLGPIDGHNVEELIEVLERSKKMKGPLLIHVVTKKGKGYMFAEKRPDKFHSAAPFDIETGKFVGEGKDSYSDVFGKTLAEMALKDEKIVAITAAMPEGTGLIHFAKLIPDRFFDVGIAEQHATTFAAGLAVEGYKPYFAVYSTFLQRAYDQVIHDVCIQKLPVVFAVDRAGIVGEDGETHQGVFDISFLRAIPNIAIMSPKDANELVEMVKLSRNLDFPVAIRYPRGKAGEYDISRKPSFPLGKGEVLLEGEKIAVFALGRMVSKSIDAAEILKGHGINPFVVNLRFVKPLDEELILEISNKVDLVVTVEDNVIAGGVGSAILELLNDKKVYRPVLRLGFPDKFIEHGDVESLFKKYGLDSQSIADTILQRYKEMRGS.

Thiamine diphosphate contacts are provided by residues His-71 and 112–114; that span reads GHS. Mg(2+) is bound at residue Asp-143. Residues 144–145, Asn-172, Tyr-283, and Glu-363 contribute to the thiamine diphosphate site; that span reads GA. Asn-172 serves as a coordination point for Mg(2+).

It belongs to the transketolase family. DXPS subfamily. As to quaternary structure, homodimer. The cofactor is Mg(2+). Thiamine diphosphate serves as cofactor.

The catalysed reaction is D-glyceraldehyde 3-phosphate + pyruvate + H(+) = 1-deoxy-D-xylulose 5-phosphate + CO2. Its pathway is metabolic intermediate biosynthesis; 1-deoxy-D-xylulose 5-phosphate biosynthesis; 1-deoxy-D-xylulose 5-phosphate from D-glyceraldehyde 3-phosphate and pyruvate: step 1/1. Its function is as follows. Catalyzes the acyloin condensation reaction between C atoms 2 and 3 of pyruvate and glyceraldehyde 3-phosphate to yield 1-deoxy-D-xylulose-5-phosphate (DXP). The chain is 1-deoxy-D-xylulose-5-phosphate synthase from Caldanaerobacter subterraneus subsp. tengcongensis (strain DSM 15242 / JCM 11007 / NBRC 100824 / MB4) (Thermoanaerobacter tengcongensis).